A 434-amino-acid chain; its full sequence is MADVKVQSESESSDSHPLVDYQSLPPYPPPHPPVEVEENQPKTSPTPPPPHWMRYPPVLMPQMMYAPPPPMPFSPYHQYPNHHHFHHQSRGNKHQNAFNGENKTIWVGDLQNWMDEAYLNSAFTSAEEREIVSLKVIRNKHNGSSEGYGFVEFESHDVADKVLQEFNGAPMPNTDQPFRLNWASFSTGEKRLENNGPDLSIFVGDLAPDVSDALLHETFSEKYPSVKAAKVVLDANTGRSKGYGFVRFGDENERTKAMTEMNGVKCSSRAMRIGPATPRKTNGYQQQGGYMPSGAFTRSEGDTINTTIFVGGLDSSVTDEDLKQPFSEFGEIVSVKIPVGKGCGFVQFVNRPNAEEALEKLNGTVIGKQTVRLSWGRNPANKQPRDKYGNQWVDPYYGGQFYNGYGYMVPQPDPRMYPAAPYYPMYGGHQQQVS.

The tract at residues 1 to 50 (MADVKVQSESESSDSHPLVDYQSLPPYPPPHPPVEVEENQPKTSPTPPPP) is disordered. 3 consecutive RRM domains span residues 103-185 (KTIW…WASF), 199-278 (LSIF…PATP), and 306-378 (TTIF…WGRN).

Belongs to the polyadenylate-binding RBP47 family. As to quaternary structure, interacts with the poly(A) tail of mRNA in nucleus.

The protein localises to the nucleus. It is found in the cytoplasmic granule. In terms of biological role, heterogeneous nuclear ribonucleoprotein (hnRNP)-protein binding the poly(A) tail of mRNA and probably involved in some steps of pre-mRNA maturation. The protein is Polyadenylate-binding protein RBP47C' (RBP47C') of Arabidopsis thaliana (Mouse-ear cress).